The primary structure comprises 293 residues: Large ribosomal subunit protein uL4 (293 aa).

Basic and acidic residues-rich tracts occupy residues 1–14 (MAEELKKTTKEKTP) and 33–55 (KTTEVKKADKLEKVSKPKSESTK). Disordered regions lie at residues 1–72 (MAEE…IKSE) and 130–166 (QRQGTHSTKTRSEVSGGGKKPWKQKGTGRARAGSTRS).

This sequence belongs to the universal ribosomal protein uL4 family. In terms of assembly, part of the 50S ribosomal subunit.

Its function is as follows. One of the primary rRNA binding proteins, this protein initially binds near the 5'-end of the 23S rRNA. It is important during the early stages of 50S assembly. It makes multiple contacts with different domains of the 23S rRNA in the assembled 50S subunit and ribosome. In terms of biological role, forms part of the polypeptide exit tunnel. This Mycoplasma mobile (strain ATCC 43663 / 163K / NCTC 11711) (Mesomycoplasma mobile) protein is Large ribosomal subunit protein uL4.